A 193-amino-acid polypeptide reads, in one-letter code: Holliday junction branch migration complex subunit RuvA (193 aa).

The domain I stretch occupies residues 1–64; the sequence is MIGRIAGTLI…EDAHLLYGFG (64 aa). Residues 65 to 143 form a domain II region; it reads TAAERETFRQ…ADLGTVPGGP (79 aa). Positions 144–151 are flexible linker; it reads AVSDDAVD. The tract at residues 151–193 is domain III; that stretch reads DVLNALLALGYSDKEAAQAIKQVPAGTGVSEGIKLALKALSKG.

Belongs to the RuvA family. Homotetramer. Forms an RuvA(8)-RuvB(12)-Holliday junction (HJ) complex. HJ DNA is sandwiched between 2 RuvA tetramers; dsDNA enters through RuvA and exits via RuvB. An RuvB hexamer assembles on each DNA strand where it exits the tetramer. Each RuvB hexamer is contacted by two RuvA subunits (via domain III) on 2 adjacent RuvB subunits; this complex drives branch migration. In the full resolvosome a probable DNA-RuvA(4)-RuvB(12)-RuvC(2) complex forms which resolves the HJ.

It is found in the cytoplasm. The RuvA-RuvB-RuvC complex processes Holliday junction (HJ) DNA during genetic recombination and DNA repair, while the RuvA-RuvB complex plays an important role in the rescue of blocked DNA replication forks via replication fork reversal (RFR). RuvA specifically binds to HJ cruciform DNA, conferring on it an open structure. The RuvB hexamer acts as an ATP-dependent pump, pulling dsDNA into and through the RuvAB complex. HJ branch migration allows RuvC to scan DNA until it finds its consensus sequence, where it cleaves and resolves the cruciform DNA. This Ralstonia nicotianae (strain ATCC BAA-1114 / GMI1000) (Ralstonia solanacearum) protein is Holliday junction branch migration complex subunit RuvA.